The following is a 327-amino-acid chain: MREVLLSECIDLLYESHFVISKPFGRSCFDLIAKKADLRFLIKILKNIDSLSTEQSEELLNIAKMLQAVPIIIGTRTRNSVMEEGAVYERYGIKAITFNTFRDQLSGEPPVVYANRGGFFVNIDGAVLRETREKLKISVGELAEISRVSRKTIYKYEQNEANPSAEVAIKIEEYLDVPLIKGINIVDYMEGLKSQKSREEAFEKILKEGEDFKIRVIDILGDMGFNLLETTKAPFDAVAEESKIEDSENQNIIFTNIQETENEEIRRKAMIVDEISKMLNSHSLLVLEKKTNENKRITSMSISELEKIGDTVDLLEFIEKRKKSKEI.

The 56-residue stretch at 128–183 folds into the HTH cro/C1-type domain; that stretch reads LRETREKLKISVGELAEISRVSRKTIYKYEQNEANPSAEVAIKIEEYLDVPLIKGI. Residues 139-158 constitute a DNA-binding region (H-T-H motif); that stretch reads VGELAEISRVSRKTIYKYEQ.

In Methanococcus maripaludis (strain C6 / ATCC BAA-1332), this protein is Putative HTH-type transcriptional regulatory protein MmarC6_0210.